Reading from the N-terminus, the 296-residue chain is Thioredoxin-related transmembrane protein 2 (296 aa).

A signal peptide spans 1 to 48 (MAVLAPLIALVYSVPRLSRWLARPYYFLSALLSAAFLLVRKLPPVCES). Topologically, residues 49 to 102 (LPTQREDGNPCDFDWREVEILMFLSAIVMMKNRRSITVEQHVGNIFMFSKVANA) are extracellular. A helical membrane pass occupies residues 103–125 (ILFFRLDIRMGLLYITLCIVFLM). Residues 126 to 296 (TCKPPLYMGP…VPDEESKKDK (171 aa)) are Cytoplasmic-facing. A Thioredoxin domain is found at 132 to 269 (YMGPEYIKYF…LYQRAKKLSK (138 aa)). Residues S211 and S243 each carry the phosphoserine modification. The segment at 272–296 (DKIPEEQPVAAVPAAVPDEESKKDK) is disordered. Over residues 277 to 287 (EQPVAAVPAAV) the composition is skewed to low complexity. A Di-lysine motif motif is present at residues 293 to 296 (KKDK).

In terms of assembly, monomer. Homodimer; disulfide-linked. Occurs in both reduced and oxidized monomeric form. Oxidative conditions increase homodimerization. Interacts with CANX. Interacts with ATP2A2.

The protein localises to the endoplasmic reticulum membrane. Its subcellular location is the mitochondrion membrane. Functionally, endoplasmic reticulum and mitochondria-associated protein that probably functions as a regulator of cellular redox state and thereby regulates protein post-translational modification, protein folding and mitochondrial activity. Indirectly regulates neuronal proliferation, migration, and organization in the developing brain. In Bos taurus (Bovine), this protein is Thioredoxin-related transmembrane protein 2 (TMX2).